The chain runs to 103 residues: Histone H4 (103 aa).

Residues 1 to 14 show a composition bias toward gly residues; that stretch reads MSGRGKGGKGLGKG. The tract at residues 1–20 is disordered; sequence MSGRGKGGKGLGKGGAKRHR. Lys6 is modified (N6-acetyl-N6-methyllysine; alternate). 3 positions are modified to N6-methyllysine; alternate: Lys6, Lys9, and Lys13. Residue Lys13 is modified to N6-acetyl-N6-methyllysine; alternate. The DNA-binding element occupies 17-21; it reads KRHRK. Position 92 is an N6-glutaryllysine (Lys92).

Belongs to the histone H4 family. In terms of assembly, the nucleosome is a histone octamer containing two molecules each of H2A, H2B, H3 and H4 assembled in one H3-H4 heterotetramer and two H2A-H2B heterodimers. The octamer wraps approximately 147 bp of DNA. Glutarylation at Lys-92 (H4K91glu) destabilizes nucleosomes by promoting dissociation of the H2A-H2B dimers from nucleosomes.

The protein localises to the nucleus. It is found in the chromosome. In terms of biological role, core component of nucleosome. Nucleosomes wrap and compact DNA into chromatin, limiting DNA accessibility to the cellular machineries which require DNA as a template. Histones thereby play a central role in transcription regulation, DNA repair, DNA replication and chromosomal stability. DNA accessibility is regulated via a complex set of post-translational modifications of histones, also called histone code, and nucleosome remodeling. The chain is Histone H4 (HHF1) from Candida glabrata (strain ATCC 2001 / BCRC 20586 / JCM 3761 / NBRC 0622 / NRRL Y-65 / CBS 138) (Yeast).